The following is a 274-amino-acid chain: MSEVEIENAATIEGNTAADAPVTDAAVEKKPAAKGRKTKNVKEVKEKKTVAAAPKKRTVSSHPTYEEMIKDAIVTLKERTGSSQYAIQKFIEEKRKELPPTFRKLLLLNLKRLVASGKLVKVKASFKLPSASAKASSPKAAAEKSAPAKKKPATVAVTKAKRKVAAASKAKKTIAVKPKTAAAKKVTAKAKAKPVPRATAAATKRKAVDAKPKAKARPAKAAKTAKVTSPAKKAVAATKKVATVATKKKTPVKKVVKPKTVKSPAKRASSRVKK.

Disordered regions lie at residues 1-63 (MSEV…SSHP) and 129-155 (PSAS…PATV). At Ser2 the chain carries N-acetylserine. Over residues 16–25 (TAADAPVTDA) the composition is skewed to low complexity. Positions 40–49 (NVKEVKEKKT) are enriched in basic and acidic residues. In terms of domain architecture, H15 spans 61–130 (SHPTYEEMIK…KVKASFKLPS (70 aa)). The segment covering 129 to 145 (PSASAKASSPKAAAEKS) has biased composition (low complexity). Lys161 is covalently cross-linked (Glycyl lysine isopeptide (Lys-Gly) (interchain with G-Cter in ubiquitin)). Disordered regions lie at residues 167–233 (ASKA…PAKK) and 249–274 (KTPV…RVKK). Low complexity-rich tracts occupy residues 175-185 (AVKPKTAAAKK) and 221-233 (AAKT…PAKK).

It belongs to the histone H1/H5 family.

It is found in the nucleus. The protein resides in the chromosome. Histones H1 are necessary for the condensation of nucleosome chains into higher-order structures. This chain is Histone H1.1, found in Arabidopsis thaliana (Mouse-ear cress).